The sequence spans 170 residues: Small ribosomal subunit protein uS3mA (170 aa).

A mitochondrion-targeting transit peptide spans 1–30; that stretch reads MAAPVMSALGRLQGLIRTERSLLTHVQSRC.

The protein belongs to the universal ribosomal protein uS3 family. Component of the mitochondrial ribosome small subunit (28S) which comprises a 12S rRNA and about 30 distinct proteins.

The protein resides in the mitochondrion. The protein is Small ribosomal subunit protein uS3mA (mrps24-a) of Xenopus laevis (African clawed frog).